The primary structure comprises 299 residues: Zinc finger protein 414 (299 aa).

2 stretches are compositionally biased toward polar residues: residues 1 to 20 (MEEP…SSSG) and 69 to 81 (DSCQ…TGVG). The tract at residues 1–98 (MEEPSRPSSD…PRRRPPPGKQ (98 aa)) is disordered. C2H2-type zinc fingers lie at residues 99-123 (IPCS…LRTH) and 135-159 (FRCS…GKLH). The C2H2-type 3; degenerate zinc-finger motif lies at 166 to 190 (FKCENCLLRFRTHRSLFKHLHVCID). Disordered stretches follow at residues 193–228 (QNPA…PFPL) and 254–299 (PRLR…GACR). The span at 203–215 (LDKEPPVPERPPE) shows a compositional bias: basic and acidic residues. Residues 217-228 (DPSSSLGLPFPL) are compositionally biased toward low complexity.

This sequence belongs to the krueppel C2H2-type zinc-finger protein family.

The protein resides in the nucleus. May be involved in transcriptional regulation. This chain is Zinc finger protein 414 (Znf414), found in Mus musculus (Mouse).